The sequence spans 143 residues: Dehydrin DHN2 (143 aa).

The segment covering 1 to 10 (MEYQGQTGHA) has biased composition (polar residues). Residues 1-143 (MEYQGQTGHA…IKEKLPGGQH (143 aa)) are disordered. Over residues 24–34 (GHGGATGGPTG) the composition is skewed to gly residues. Residues 35–46 (THGAAAAAAGTG) are compositionally biased toward low complexity. The span at 51–61 (TRDDHKTDGVL) shows a compositional bias: basic and acidic residues. Residues 62–71 (RRSGSSSSSS) show a composition bias toward low complexity. The span at 86 to 101 (KEKIKEKLPGGAHKDA) shows a compositional bias: basic and acidic residues. Residues 109–123 (AAGEYAGTGTHGAEA) are compositionally biased toward low complexity. Residues 124–143 (TGEKKGVMDKIKEKLPGGQH) show a composition bias toward basic and acidic residues.

This sequence belongs to the plant dehydrin family.

The chain is Dehydrin DHN2 (DHN2) from Hordeum vulgare (Barley).